A 150-amino-acid chain; its full sequence is Ribosome maturation factor RimP (150 aa).

This sequence belongs to the RimP family.

Its subcellular location is the cytoplasm. Functionally, required for maturation of 30S ribosomal subunits. The polypeptide is Ribosome maturation factor RimP (Hahella chejuensis (strain KCTC 2396)).